Consider the following 397-residue polypeptide: Sporulation-specific protein 20 (397 aa).

A disordered region spans residues 1–26 (MGFRKILASKSHHSRHHNQHHKNLKL). An inhibitory region region spans residues 4–50 (RKILASKSHHSRHHNQHHKNLKLQNHRYVLISNITGSHETKYLSPFR). Basic residues predominate over residues 10–26 (KSHHSRHHNQHHKNLKL). A positive regulatory region region spans residues 51 to 95 (MDNCSGSRRRDRLHVKLKSLRNKIHKQLHPNCRFDDATKTSDDKC). The t-SNARE coiled-coil homology domain occupies 330 to 392 (NQMEIDLYGN…QAKRYRLEKV (63 aa)).

The protein belongs to the SNAP-25 family. Interacts with the t-SNARE SSO1 and the v-SNARE SNC2.

Its subcellular location is the cell membrane. It is found in the prospore membrane. Required to maintain the prospore membrane to the nucleus during sporulation in order to capture the daughter nuclei and form the spores. Mediates the fusion of exocytic vesicles with the plasma membrane during sporulation through its interactions with the t-SNARE SSO1 and v-SNARE SNC2. In Saccharomyces cerevisiae (strain ATCC 204508 / S288c) (Baker's yeast), this protein is Sporulation-specific protein 20 (SPO20).